The following is a 462-amino-acid chain: Trigger factor (462 aa).

The PPIase FKBP-type domain maps to 161 to 246 (GDVVVIDFVG…VKEVRAPKAA (86 aa)). Over residues 428–437 (SVEDLRKDPD) the composition is skewed to basic and acidic residues. The segment at 428 to 462 (SVEDLRKDPDEASADGEAAPAKPKKKAAAKKKAAE) is disordered. Over residues 449-462 (KPKKKAAAKKKAAE) the composition is skewed to basic residues.

It belongs to the FKBP-type PPIase family. Tig subfamily.

The protein resides in the cytoplasm. The catalysed reaction is [protein]-peptidylproline (omega=180) = [protein]-peptidylproline (omega=0). Its function is as follows. Involved in protein export. Acts as a chaperone by maintaining the newly synthesized protein in an open conformation. Functions as a peptidyl-prolyl cis-trans isomerase. This Paramagnetospirillum magneticum (strain ATCC 700264 / AMB-1) (Magnetospirillum magneticum) protein is Trigger factor.